The chain runs to 49 residues: Small integral membrane protein 27 (49 aa).

The helical transmembrane segment at 11–31 threads the bilayer; sequence WTYSLLLLAIVLLSWGFVIYA.

It localises to the membrane. In Mus musculus (Mouse), this protein is Small integral membrane protein 27.